The following is a 215-amino-acid chain: Ribonuclease HII (215 aa).

Residues 19–214 (KNVIGVDEAG…KILETEEEKT (196 aa)) form the RNase H type-2 domain. Residues aspartate 25, glutamate 26, and aspartate 121 each contribute to the a divalent metal cation site.

It belongs to the RNase HII family. Mn(2+) serves as cofactor. Requires Mg(2+) as cofactor.

It is found in the cytoplasm. It catalyses the reaction Endonucleolytic cleavage to 5'-phosphomonoester.. Endonuclease that specifically degrades the RNA of RNA-DNA hybrids. In Fusobacterium nucleatum subsp. nucleatum (strain ATCC 25586 / DSM 15643 / BCRC 10681 / CIP 101130 / JCM 8532 / KCTC 2640 / LMG 13131 / VPI 4355), this protein is Ribonuclease HII.